A 152-amino-acid polypeptide reads, in one-letter code: Xanthine-guanine phosphoribosyltransferase (152 aa).

Residues Arg-37–Gly-38, Arg-69, and Asp-88–Thr-96 contribute to the 5-phospho-alpha-D-ribose 1-diphosphate site. Arg-69 contacts GMP. Asp-89 is a Mg(2+) binding site. Residues Asp-92 and Ile-135 each coordinate guanine. Positions 92 and 135 each coordinate xanthine. GMP is bound by residues Asp-92–Thr-96 and Trp-134–Ile-135.

This sequence belongs to the purine/pyrimidine phosphoribosyltransferase family. XGPT subfamily. As to quaternary structure, homotetramer. Mg(2+) serves as cofactor.

The protein localises to the cell inner membrane. The catalysed reaction is GMP + diphosphate = guanine + 5-phospho-alpha-D-ribose 1-diphosphate. It catalyses the reaction XMP + diphosphate = xanthine + 5-phospho-alpha-D-ribose 1-diphosphate. The enzyme catalyses IMP + diphosphate = hypoxanthine + 5-phospho-alpha-D-ribose 1-diphosphate. Its pathway is purine metabolism; GMP biosynthesis via salvage pathway; GMP from guanine: step 1/1. It functions in the pathway purine metabolism; XMP biosynthesis via salvage pathway; XMP from xanthine: step 1/1. Functionally, purine salvage pathway enzyme that catalyzes the transfer of the ribosyl-5-phosphate group from 5-phospho-alpha-D-ribose 1-diphosphate (PRPP) to the N9 position of the 6-oxopurines guanine and xanthine to form the corresponding ribonucleotides GMP (guanosine 5'-monophosphate) and XMP (xanthosine 5'-monophosphate), with the release of PPi. To a lesser extent, also acts on hypoxanthine. The polypeptide is Xanthine-guanine phosphoribosyltransferase (Escherichia coli O127:H6 (strain E2348/69 / EPEC)).